The chain runs to 349 residues: Protein-glutamate methylesterase/protein-glutamine glutaminase 3 (349 aa).

The Response regulatory domain maps to aspartate 2–serine 119. At aspartate 52 the chain carries 4-aspartylphosphate. A CheB-type methylesterase domain is found at glutamate 157–leucine 340. Residues serine 169, histidine 196, and aspartate 289 contribute to the active site.

It belongs to the CheB family. Post-translationally, phosphorylated by CheA. Phosphorylation of the N-terminal regulatory domain activates the methylesterase activity.

Its subcellular location is the cytoplasm. It catalyses the reaction [protein]-L-glutamate 5-O-methyl ester + H2O = L-glutamyl-[protein] + methanol + H(+). The enzyme catalyses L-glutaminyl-[protein] + H2O = L-glutamyl-[protein] + NH4(+). Its function is as follows. Involved in chemotaxis. Part of a chemotaxis signal transduction system that modulates chemotaxis in response to various stimuli. Catalyzes the demethylation of specific methylglutamate residues introduced into the chemoreceptors (methyl-accepting chemotaxis proteins or MCP) by CheR. Also mediates the irreversible deamidation of specific glutamine residues to glutamic acid. The chain is Protein-glutamate methylesterase/protein-glutamine glutaminase 3 from Hahella chejuensis (strain KCTC 2396).